Reading from the N-terminus, the 356-residue chain is Probable arabinogalactan endo-beta-1,4-galactanase A (356 aa).

Positions 1-21 (MLGKTVLLPLLVLLCHSLASA) are cleaved as a signal peptide. Asparagine 133 carries an N-linked (GlcNAc...) asparagine glycan. Catalysis depends on glutamate 157, which acts as the Proton donor. Catalysis depends on glutamate 268, which acts as the Nucleophile.

It belongs to the glycosyl hydrolase 53 family.

It localises to the secreted. It catalyses the reaction The enzyme specifically hydrolyzes (1-&gt;4)-beta-D-galactosidic linkages in type I arabinogalactans.. Endogalactanase involved in the degradation of plant cell wall polysaccharides, and more particularly of hairy regions of pectin. The chain is Probable arabinogalactan endo-beta-1,4-galactanase A (galA) from Aspergillus fumigatus (strain ATCC MYA-4609 / CBS 101355 / FGSC A1100 / Af293) (Neosartorya fumigata).